Here is a 165-residue protein sequence, read N- to C-terminus: Neurotrophin-3 (165 aa).

A signal peptide spans 1–3; sequence IQS. Positions 4–119 are excised as a propeptide; the sequence is TSMDQGSLSE…VLNQTSRRKR (116 aa). N-linked (GlcNAc...) asparagine glycosylation is present at asparagine 112.

It belongs to the NGF-beta family.

Its subcellular location is the secreted. Seems to promote the survival of visceral and proprioceptive sensory neurons. The polypeptide is Neurotrophin-3 (NTF3) (Aspidites melanocephalus (Black-headed python)).